We begin with the raw amino-acid sequence, 99 residues long: Nucleoid-associated protein EbfC (99 aa).

It belongs to the YbaB/EbfC family. Homodimer.

It localises to the cytoplasm. Its subcellular location is the nucleoid. In terms of biological role, binds to DNA and alters its conformation. May be involved in regulation of gene expression, nucleoid organization and DNA protection. This chain is Nucleoid-associated protein EbfC, found in Borreliella burgdorferi (strain ZS7) (Borrelia burgdorferi).